A 410-amino-acid chain; its full sequence is Multifunctional CCA protein (410 aa).

The ATP site is built by Gly8 and Arg11. Residues Gly8 and Arg11 each contribute to the CTP site. Positions 21 and 23 each coordinate Mg(2+). ATP is bound by residues Arg91, Arg137, and Arg140. 3 residues coordinate CTP: Arg91, Arg137, and Arg140. The 102-residue stretch at 225–326 (SGIHTLMTLQ…LNVLKKTDAF (102 aa)) folds into the HD domain.

The protein belongs to the tRNA nucleotidyltransferase/poly(A) polymerase family. Bacterial CCA-adding enzyme type 1 subfamily. Monomer. Can also form homodimers and oligomers. Mg(2+) is required as a cofactor. It depends on Ni(2+) as a cofactor.

The catalysed reaction is a tRNA precursor + 2 CTP + ATP = a tRNA with a 3' CCA end + 3 diphosphate. It carries out the reaction a tRNA with a 3' CCA end + 2 CTP + ATP = a tRNA with a 3' CCACCA end + 3 diphosphate. Its function is as follows. Catalyzes the addition and repair of the essential 3'-terminal CCA sequence in tRNAs without using a nucleic acid template. Adds these three nucleotides in the order of C, C, and A to the tRNA nucleotide-73, using CTP and ATP as substrates and producing inorganic pyrophosphate. tRNA 3'-terminal CCA addition is required both for tRNA processing and repair. Also involved in tRNA surveillance by mediating tandem CCA addition to generate a CCACCA at the 3' terminus of unstable tRNAs. While stable tRNAs receive only 3'-terminal CCA, unstable tRNAs are marked with CCACCA and rapidly degraded. In Neisseria gonorrhoeae (strain NCCP11945), this protein is Multifunctional CCA protein.